A 440-amino-acid polypeptide reads, in one-letter code: Gap junction alpha-8 protein (440 aa).

The stretch at 2–12 (GDWSFLGNILE) is an intramembrane region. Residues 13–21 (EVNEHSTVI) lie on the Cytoplasmic side of the membrane. Residues 22–42 (GRVWLTVLFIFRILILGTAAE) traverse the membrane as a helical segment. At 43 to 71 (FVWGDEQSDFVCNTQQPGCENVCYDEAFP) the chain is on the extracellular side. 3 disulfides stabilise this stretch: C54–C201, C61–C195, and C65–C190. The chain crosses the membrane as a helical span at residues 72-92 (ISHIRLWVLQIIFVSTPSLVY). Topologically, residues 93 to 161 (VGHAVHHVRM…GTLLRTYVCH (69 aa)) are cytoplasmic. Positions 108 to 144 (EREAEELSQQSPGNGGERAPLAADQGSVKKSSSSSKG) are disordered. The chain crosses the membrane as a helical span at residues 162–182 (IIFKTLFEVGFIVGHYFLYGF). Over 183–210 (RILPLYRCSRWPCPNVVDCFVSRPTEKT) the chain is Extracellular. Residues 211–231 (IFILFMLSVASVSLFLNILEM) traverse the membrane as a helical segment. The Cytoplasmic segment spans residues 232-440 (SHLGLKKIRS…SRARSDDLTV (209 aa)). The segment at 334–440 (GAQEGVEEEQ…SRARSDDLTV (107 aa)) is disordered. 2 stretches are compositionally biased toward basic and acidic residues: residues 353–365 (VGDK…RVST) and 375–405 (EEEK…ELTP). A compositionally biased stretch (low complexity) spans 423–432 (LSRLSKASSR).

This sequence belongs to the connexin family. Alpha-type (group II) subfamily. In terms of assembly, a hemichannel or connexon is composed of a hexamer of connexins. A functional gap junction is formed by the apposition of two hemichannels. Forms heteromeric channels with GJA3. As to expression, detected in eye lens (at protein level). Eye lens.

It is found in the cell membrane. Its subcellular location is the cell junction. The protein resides in the gap junction. Its function is as follows. Structural component of eye lens gap junctions. Gap junctions are dodecameric channels that connect the cytoplasm of adjoining cells. They are formed by the docking of two hexameric hemichannels, one from each cell membrane. Small molecules and ions diffuse from one cell to a neighboring cell via the central pore. This chain is Gap junction alpha-8 protein (GJA8), found in Ovis aries (Sheep).